A 640-amino-acid chain; its full sequence is Serine/threonine-protein phosphatase with EF-hands 1 (640 aa).

An IQ domain is found at 16–45 (VVRAALIIQNWYRRYRARLSARQHYALAIF). The interval 122–445 (INLLLQAFKQ…PQFFQYQVTS (324 aa)) is catalytic. D173, H175, D202, and N234 together coordinate Mn(2+). H235 (proton donor) is an active-site residue. H286 and H393 together coordinate Mn(2+). EF-hand domains follow at residues 473 to 508 (ARKTDLINAFELRDHSRTGKISLAQWAFSMESILGL), 556 to 591 (RYRSDLKIIFNIIDTDQSGLISMDEFRTMWKLFNAH), and 596 to 631 (IDDSQIDELASTMDSNKDGNIDFNEFLRAFYVVHKY). 9 residues coordinate Ca(2+): D569, D571, S573, E580, D609, N611, D613, N615, and E620.

This sequence belongs to the PPP phosphatase family. Requires Mn(2+) as cofactor. Mg(2+) serves as cofactor.

The catalysed reaction is O-phospho-L-seryl-[protein] + H2O = L-seryl-[protein] + phosphate. The enzyme catalyses O-phospho-L-threonyl-[protein] + H2O = L-threonyl-[protein] + phosphate. Its activity is regulated as follows. Activated by calcium. May have a role in the recovery or adaptation response of photoreceptors. May have a role in development. This chain is Serine/threonine-protein phosphatase with EF-hands 1 (Ppef1), found in Rattus norvegicus (Rat).